The sequence spans 500 residues: L-arabinose isomerase (500 aa).

Mn(2+) is bound by residues Glu306, Glu333, His350, and His450.

It belongs to the arabinose isomerase family. As to quaternary structure, homohexamer. Mn(2+) is required as a cofactor.

It catalyses the reaction beta-L-arabinopyranose = L-ribulose. It participates in carbohydrate degradation; L-arabinose degradation via L-ribulose; D-xylulose 5-phosphate from L-arabinose (bacterial route): step 1/3. Functionally, catalyzes the conversion of L-arabinose to L-ribulose. The polypeptide is L-arabinose isomerase (Salmonella typhi).